Reading from the N-terminus, the 556-residue chain is 2-succinyl-5-enolpyruvyl-6-hydroxy-3-cyclohexene-1-carboxylate synthase (556 aa).

It belongs to the TPP enzyme family. MenD subfamily. In terms of assembly, homodimer. It depends on Mg(2+) as a cofactor. Mn(2+) serves as cofactor. Thiamine diphosphate is required as a cofactor.

It carries out the reaction isochorismate + 2-oxoglutarate + H(+) = 5-enolpyruvoyl-6-hydroxy-2-succinyl-cyclohex-3-ene-1-carboxylate + CO2. Its pathway is quinol/quinone metabolism; 1,4-dihydroxy-2-naphthoate biosynthesis; 1,4-dihydroxy-2-naphthoate from chorismate: step 2/7. The protein operates within quinol/quinone metabolism; menaquinone biosynthesis. In terms of biological role, catalyzes the thiamine diphosphate-dependent decarboxylation of 2-oxoglutarate and the subsequent addition of the resulting succinic semialdehyde-thiamine pyrophosphate anion to isochorismate to yield 2-succinyl-5-enolpyruvyl-6-hydroxy-3-cyclohexene-1-carboxylate (SEPHCHC). This chain is 2-succinyl-5-enolpyruvyl-6-hydroxy-3-cyclohexene-1-carboxylate synthase, found in Escherichia fergusonii (strain ATCC 35469 / DSM 13698 / CCUG 18766 / IAM 14443 / JCM 21226 / LMG 7866 / NBRC 102419 / NCTC 12128 / CDC 0568-73).